The following is a 1745-amino-acid chain: ADAMTS-like protein 1 (1745 aa).

Residues 1–28 (MECCRRAAPGTPLLVLAFLLLSSRTARS) form the signal peptide. One can recognise a TSP type-1 1 domain in the interval 33 to 82 (EGLWDAWGPWSECSRTCGGGASYSLRRCLSSKSCEGRNIRYRTCSNVDCP). 3 disulfides stabilise this stretch: C45/C76, C49/C81, and C60/C66. N251 carries N-linked (GlcNAc...) asparagine glycosylation. 2 O-linked (Fuc...) serine glycosylation sites follow: S310 and S391. 6 consecutive TSP type-1 domains span residues 376–424 (PLPR…MYTP), 436–493 (DCPK…TPCY), 522–584 (EEPS…GPCN), 607–667 (ELYD…DPCP), 703–762 (CPPA…KKDD), and 763–825 (CPSE…ATCA). A glycan (O-linked (Fuc...) threonine) is linked at T451. Disulfide bonds link C534–C578, C538–C583, and C549–C567. Cystine bridges form between C775–C819, C779–C824, C790–C807, and C874–C922. The Ig-like C2-type 1 domain maps to 836–938 (PHIAAARNIY…EQFVIKLIGG (103 aa)). Disordered stretches follow at residues 966-991 (EALQ…GLTA) and 1114-1137 (VSGF…RPHR). Low complexity predominate over residues 1115–1126 (SGFSSSLRSSSG). 3 Ig-like C2-type domains span residues 1139–1241 (PAIL…IAVT), 1261–1352 (PTVT…TQLL), and 1378–1468 (PSVL…ASLV). 3 cysteine pairs are disulfide-bonded: C1177-C1225, C1283-C1336, and C1401-C1452. 2 TSP type-1 domains span residues 1528-1591 (CPSR…QLCV) and 1649-1709 (CSVH…TPCE). The region spanning 1709 to 1745 (ENTECRDTTRYCEKVRQLKLCQLGQFRSRCCGTCGKA) is the PLAC domain.

Monomer. Glycosylated. O-fucosylated by POFUT2 on a serine or a threonine residue found within the consensus sequence C1-X(2)-(S/T)-C2-G of the TSP type-1 repeat domains where C1 and C2 are the first and second cysteine residue of the repeat, respectively. Fucosylated repeats can then be further glycosylated by the addition of a beta-1,3-glucose residue by the glucosyltransferase, B3GALTL. Fucosylation mediates the efficient secretion of ADAMTS family members. Can also be C-glycosylated with one or two mannose molecules on tryptophan residues within the consensus sequence W-X-X-W of the TPRs, and N-glycosylated. These other glycosylations can also facilitate secretion. In terms of processing, disulfide bonds are present.

The protein localises to the secreted. It localises to the extracellular space. The protein resides in the extracellular matrix. This is ADAMTS-like protein 1 (Adamtsl1) from Mus musculus (Mouse).